Consider the following 171-residue polypeptide: Mitoferrin-1 (171 aa).

The tract at residues 1–40 (MELRRGGVGSQARARRMDGDSRDGGGGCKDAGSEDYENLP) is disordered. A Solcar repeat occupies 43 to 131 (ASLSTHMTAG…FACYENMKRT (89 aa)). Helical transmembrane passes span 45 to 64 (LSTH…SVMY), 105 to 125 (RGLN…FACY), and 143 to 163 (HLAN…PSTD).

Belongs to the mitochondrial carrier (TC 2.A.29) family. As to quaternary structure, interacts with ACB10; this interaction stabilizes SLC25A37 and enhances the function of SLC25A37 to import mitochondrial iron during erythroid differentiation.

Its subcellular location is the mitochondrion inner membrane. The enzyme catalyses Fe(2+)(in) = Fe(2+)(out). Functionally, mitochondrial iron transporter that specifically mediates iron uptake in developing erythroid cells, thereby playing an essential role in heme biosynthesis. This chain is Mitoferrin-1 (SLC25A37), found in Bos taurus (Bovine).